Consider the following 246-residue polypeptide: Uridylate kinase (246 aa).

Lysine 11–glycine 14 contributes to the ATP binding site. UMP is bound at residue glycine 53. The ATP site is built by glycine 54 and arginine 58. UMP is bound by residues aspartate 74 and threonine 135 to threonine 142. ATP-binding residues include threonine 162, tyrosine 169, and aspartate 172.

It belongs to the UMP kinase family. Homohexamer.

It localises to the cytoplasm. The catalysed reaction is UMP + ATP = UDP + ADP. The protein operates within pyrimidine metabolism; CTP biosynthesis via de novo pathway; UDP from UMP (UMPK route): step 1/1. With respect to regulation, inhibited by UTP. In terms of biological role, catalyzes the reversible phosphorylation of UMP to UDP. This Chlamydia abortus (strain DSM 27085 / S26/3) (Chlamydophila abortus) protein is Uridylate kinase.